The primary structure comprises 134 residues: Bet1-like protein At1g29060 (134 aa).

Residues 1-12 (MASNRGAGGSLY) are compositionally biased toward gly residues. A disordered region spans residues 1–31 (MASNRGAGGSLYGGADPYRSREGLSTRNASG). Topologically, residues 1–110 (MASNRGAGGS…LSIIRSGNNH (110 aa)) are cytoplasmic. Residues 40–102 (DPMHSDLDDE…KNNIRKLNLS (63 aa)) enclose the t-SNARE coiled-coil homology domain. The chain crosses the membrane as a helical; Anchor for type IV membrane protein span at residues 111–131 (IMHVVLFALLLFFILYMWSKM). Residues 132 to 134 (FKR) lie on the Vesicular side of the membrane.

Belongs to the BET1 family.

It is found in the golgi apparatus membrane. The protein localises to the endoplasmic reticulum membrane. In terms of biological role, required for vesicular transport from the ER to the Golgi complex. Functions as a SNARE associated with ER-derived vesicles. The polypeptide is Bet1-like protein At1g29060 (Arabidopsis thaliana (Mouse-ear cress)).